The sequence spans 226 residues: Large ribosomal subunit protein uL3 (226 aa).

A disordered region spans residues M135–Q158. The span at S137–V150 shows a compositional bias: polar residues. At Q158 the chain carries N5-methylglutamine.

This sequence belongs to the universal ribosomal protein uL3 family. Part of the 50S ribosomal subunit. Forms a cluster with proteins L14 and L19. Post-translationally, methylated by PrmB.

In terms of biological role, one of the primary rRNA binding proteins, it binds directly near the 3'-end of the 23S rRNA, where it nucleates assembly of the 50S subunit. The polypeptide is Large ribosomal subunit protein uL3 (Polaromonas naphthalenivorans (strain CJ2)).